The primary structure comprises 307 residues: ATP synthase gamma chain (307 aa).

This sequence belongs to the ATPase gamma chain family. F-type ATPases have 2 components, CF(1) - the catalytic core - and CF(0) - the membrane proton channel. CF(1) has five subunits: alpha(3), beta(3), gamma(1), delta(1), epsilon(1). CF(0) has three main subunits: a, b and c.

It localises to the cell membrane. In terms of biological role, produces ATP from ADP in the presence of a proton gradient across the membrane. The gamma chain is believed to be important in regulating ATPase activity and the flow of protons through the CF(0) complex. This chain is ATP synthase gamma chain, found in Bifidobacterium longum subsp. infantis (strain ATCC 15697 / DSM 20088 / JCM 1222 / NCTC 11817 / S12).